We begin with the raw amino-acid sequence, 84 residues long: Dolichol phosphate-mannose biosynthesis regulatory protein (84 aa).

Helical transmembrane passes span 11-31 (LGLVALSLIIFTYYTAWVILL) and 49-69 (YAIAIPLAAGHLLLLFVGIFI).

The protein belongs to the DPM2 family. In terms of assembly, component of the dolichol-phosphate mannose (DPM) synthase complex composed of DPM1, DPM2 and DPM3; in the complex interacts directly with DPM3. Component of the glycosylphosphatidylinositol-N-acetylglucosaminyltransferase (GPI-GnT) complex composed at least by PIGA, PIGC, PIGH, PIGP, PIGQ, PIGY and DPM2. Interacts with PIGA, PIGC and PIGQ.

It is found in the endoplasmic reticulum membrane. Its pathway is protein modification; protein glycosylation. Regulates the biosynthesis of dolichol phosphate-mannose. Regulatory subunit of the dolichol-phosphate mannose (DPM) synthase complex; essential for the ER localization and stable expression of DPM1. Part of the glycosylphosphatidylinositol-N-acetylglucosaminyltransferase (GPI-GnT) complex that catalyzes the transfer of N-acetylglucosamine from UDP-N-acetylglucosamine to phosphatidylinositol and participates in the first step of GPI biosynthesis. May act by regulating the GPI-GNT complex. The chain is Dolichol phosphate-mannose biosynthesis regulatory protein from Bos taurus (Bovine).